Reading from the N-terminus, the 224-residue chain is Transposase for insertion sequence element IS257 in transposon Tn4003 (224 aa).

Residues 33-52 constitute a DNA-binding region (H-T-H motif); the sequence is EILRGRGVNVHHSTVYRWVQ. In terms of domain architecture, Integrase catalytic spans 73–222; it reads WRIDETYIKI…SPCHEISIML (150 aa).

Its function is as follows. Involved in the transposition of the insertion sequence. The chain is Transposase for insertion sequence element IS257 in transposon Tn4003 from Staphylococcus aureus.